A 725-amino-acid chain; its full sequence is Methionine--tRNA ligase (725 aa).

The 'HIGH' region signature appears at 27–37 (PYANGQIHIGH). Zn(2+) is bound by residues Cys-158, Cys-161, Cys-171, and Cys-174. The 'KMSKS' region motif lies at 348–352 (KMSKS). Lys-351 provides a ligand contact to ATP. A tRNA-binding domain is found at 619–725 (DFAKIDLRIA…SGAKPGMRVK (107 aa)).

The protein belongs to the class-I aminoacyl-tRNA synthetase family. MetG type 1 subfamily. Homodimer. Zn(2+) is required as a cofactor.

The protein localises to the cytoplasm. The enzyme catalyses tRNA(Met) + L-methionine + ATP = L-methionyl-tRNA(Met) + AMP + diphosphate. Functionally, is required not only for elongation of protein synthesis but also for the initiation of all mRNA translation through initiator tRNA(fMet) aminoacylation. The chain is Methionine--tRNA ligase from Burkholderia pseudomallei (strain 1106a).